A 435-amino-acid polypeptide reads, in one-letter code: Methylenetetrahydrofolate--tRNA-(uracil-5-)-methyltransferase TrmFO (435 aa).

10-15 (GAGLAG) is an FAD binding site.

It belongs to the MnmG family. TrmFO subfamily. As to quaternary structure, homodimer. FAD is required as a cofactor.

It localises to the cytoplasm. It carries out the reaction uridine(54) in tRNA + (6R)-5,10-methylene-5,6,7,8-tetrahydrofolate + NADH + H(+) = 5-methyluridine(54) in tRNA + (6S)-5,6,7,8-tetrahydrofolate + NAD(+). The catalysed reaction is uridine(54) in tRNA + (6R)-5,10-methylene-5,6,7,8-tetrahydrofolate + NADPH + H(+) = 5-methyluridine(54) in tRNA + (6S)-5,6,7,8-tetrahydrofolate + NADP(+). Its function is as follows. Catalyzes the folate-dependent formation of 5-methyl-uridine at position 54 (M-5-U54) in all tRNAs. The sequence is that of Methylenetetrahydrofolate--tRNA-(uracil-5-)-methyltransferase TrmFO from Bacillus subtilis (strain 168).